The sequence spans 577 residues: Polyadenylate-binding protein, cytoplasmic and nuclear (577 aa).

Over residues 1–10 (MADITDKTAE) the composition is skewed to basic and acidic residues. Residues 1–36 (MADITDKTAEQLENLNIQDDQKQAATGSESQSVENS) form a disordered region. Alanine 2 carries the post-translational modification N-acetylalanine. Lysine 7 is covalently cross-linked (Glycyl lysine isopeptide (Lys-Gly) (interchain with G-Cter in ubiquitin)). A required and sufficient for nuclear export region spans residues 9–61 (AEQLENLNIQDDQKQAATGSESQSVENSSASLYVGDLEPSVSEAHLYDIFSPI). Positions 11-27 (QLENLNIQDDQKQAATG) are enriched in polar residues. The short motif at 12 to 17 (LENLNI) is the Nuclear export signal element. RRM domains follow at residues 38 to 116 (ASLY…WSQR), 126 to 203 (GNIF…PHLS), 219 to 296 (TNLY…RAQK), and 322 to 399 (VNLF…IAQR). Position 107 is an omega-N-methylarginine (arginine 107). Serine 249 is modified (phosphoserine). The interval 281 to 317 (DSELNGEKLYVGRAQKKNERMHVLKKQYEAYRLEKMA) is required and sufficient for nuclear import. Phosphoserine is present on serine 332. A Glycyl lysine isopeptide (Lys-Gly) (interchain with G-Cter in ubiquitin) cross-link involves residue lysine 337. Residue serine 405 is modified to Phosphoserine. Residues 473 to 577 (PPQFRNGPVY…KEQEQQTEQA (105 aa)) form an interaction with SUP35 region. Positions 489-568 (GFPRNANDNN…ASAAYESFKK (80 aa)) constitute a PABC domain.

The protein belongs to the polyadenylate-binding protein type-1 family. As to quaternary structure, binds to poly(A) mRNA to form a periodic structure with a packing density of one molecule per 25 adenylate residues. Interacts with the nuclear export factor CRM1 and with the importin SXM1. Interacts with RNA15, a component of the cleavage factor IA (CFIA) complex. Interacts with translation initiation factor eIF4G (TIF4631 or TIF4632) and release factor eRF3 (SUP35). Interacts with the PAB-dependent poly(A)-nuclease (PAN) complex regulatory subunit PAN3. Interacts with ARF1, DCP1, PBP1, the Hsp70 chaperone SSA1, and TPA1. Interacts with PAT1 in an RNA-dependent manner.

It is found in the cytoplasm. It localises to the nucleus. In terms of biological role, binds the poly(A) tail of mRNA. Appears to be an important mediator of the multiple roles of the poly(A) tail in mRNA biogenesis, stability and translation. In the nucleus, interacts with the nuclear cleavage factor IA (CFIA), which is required for both mRNA cleavage and polyadenylation. Is also required for efficient mRNA export to the cytoplasm. Acts in concert with a poly(A)-specific nuclease (PAN) to affect poly(A) tail shortening, which may occur concomitantly with either nucleocytoplasmic mRNA transport or translational initiation. Regulates PAN activity via interaction with the stimulator PAN3 or the inhibitor PBP1. In the cytoplasm, affects both translation and mRNA decay. Stimulates translation by interaction with translation initiation factor eIF4G, a subunit of the cap-binding complex eIF4F, bringing the 5'- and 3'-ends of the mRNA in proximity. The formation of this circular mRNP structure appears to be critical for the synergistic effects of the cap and the poly(A) tail in facilitating translation initiation, recycling of ribosomes, and mRNA stability. Also regulates translation termination by recruiting eukaryotic release factor 3 (eRF3). Interaction with eRF3 is also required for regulation of normal mRNA decay through translation termination-coupled poly(A) shortening, probably mediated by PAN. Loss of PAB1 from the mRNP after deadenylation triggers mRNA degradation. Inhibits the major cytoplasmic mRNA deadenylase CCR4-NOT complex. Is also associated peripherally with COPI vesicles through its interaction with ARF1, and this is required for correct localization of the asymmetrically distributed ASH1 mRNA. The sequence is that of Polyadenylate-binding protein, cytoplasmic and nuclear (PAB1) from Saccharomyces cerevisiae (strain ATCC 204508 / S288c) (Baker's yeast).